Consider the following 445-residue polypeptide: UPF0210 protein STER_0157 (445 aa).

Belongs to the UPF0210 family. In terms of assembly, homodimer.

The sequence is that of UPF0210 protein STER_0157 from Streptococcus thermophilus (strain ATCC BAA-491 / LMD-9).